The chain runs to 919 residues: Valine--tRNA ligase (919 aa).

A 'HIGH' region motif is present at residues 66 to 76 (PNVTGQLHMGH). Residues 562-566 (KMSKS) carry the 'KMSKS' region motif. Lysine 565 lines the ATP pocket. Residues 852–919 (TVDKEAERKR…RISARLEELK (68 aa)) adopt a coiled-coil conformation.

The protein belongs to the class-I aminoacyl-tRNA synthetase family. ValS type 1 subfamily. Monomer.

Its subcellular location is the cytoplasm. The enzyme catalyses tRNA(Val) + L-valine + ATP = L-valyl-tRNA(Val) + AMP + diphosphate. Catalyzes the attachment of valine to tRNA(Val). As ValRS can inadvertently accommodate and process structurally similar amino acids such as threonine, to avoid such errors, it has a 'posttransfer' editing activity that hydrolyzes mischarged Thr-tRNA(Val) in a tRNA-dependent manner. The sequence is that of Valine--tRNA ligase from Corynebacterium diphtheriae (strain ATCC 700971 / NCTC 13129 / Biotype gravis).